The following is a 328-amino-acid chain: Mannitol-1-phosphate 5-dehydrogenase (328 aa).

3 to 14 (LIHFGAGNIGCG) serves as a coordination point for NAD(+).

It belongs to the mannitol dehydrogenase family.

It catalyses the reaction D-mannitol 1-phosphate + NAD(+) = beta-D-fructose 6-phosphate + NADH + H(+). In Mycoplasma mycoides subsp. mycoides SC (strain CCUG 32753 / NCTC 10114 / PG1), this protein is Mannitol-1-phosphate 5-dehydrogenase (mtlD).